Here is a 98-residue protein sequence, read N- to C-terminus: NADH-ubiquinone oxidoreductase chain 4L (98 aa).

3 consecutive transmembrane segments (helical) span residues 1-21, 29-49, and 61-81; these read MSLTYMNMFMAFTISLLGLLM, SLLCLEGMMLSLFVMMTMVIL, and IILLVFAACEAALGLSLLVMV.

Belongs to the complex I subunit 4L family. In terms of assembly, core subunit of respiratory chain NADH dehydrogenase (Complex I) which is composed of 45 different subunits.

The protein resides in the mitochondrion inner membrane. The catalysed reaction is a ubiquinone + NADH + 5 H(+)(in) = a ubiquinol + NAD(+) + 4 H(+)(out). Functionally, core subunit of the mitochondrial membrane respiratory chain NADH dehydrogenase (Complex I) which catalyzes electron transfer from NADH through the respiratory chain, using ubiquinone as an electron acceptor. Part of the enzyme membrane arm which is embedded in the lipid bilayer and involved in proton translocation. In Vampyressa thyone (Northern little yellow-eared bat), this protein is NADH-ubiquinone oxidoreductase chain 4L (MT-ND4L).